Consider the following 147-residue polypeptide: Large ribosomal subunit protein uL15 (147 aa).

Over residues 1–28 the composition is skewed to basic residues; sequence MIRRRKKVRKLRGSHTHGWGCKKKHRGG. A disordered region spans residues 1–43; that stretch reads MIRRRKKVRKLRGSHTHGWGCKKKHRGGGSKGGRGMAGTGKRN. Over residues 29-38 the composition is skewed to gly residues; the sequence is GSKGGRGMAG.

This sequence belongs to the universal ribosomal protein uL15 family. In terms of assembly, part of the 50S ribosomal subunit.

Binds to the 23S rRNA. The sequence is that of Large ribosomal subunit protein uL15 from Pyrococcus abyssi (strain GE5 / Orsay).